Here is a 21-residue protein sequence, read N- to C-terminus: Fibrinogen beta chain (21 aa).

Q1 is subject to Pyrrolidone carboxylic acid. Positions 1-11 (QHSTDYDEEEE) are enriched in acidic residues. The disordered stretch occupies residues 1-21 (QHSTDYDEEEEDRAKLHLDAR). O-linked (GalNAc...) threonine glycosylation is present at T4. At Y6 the chain carries Sulfotyrosine. The segment covering 12 to 21 (DRAKLHLDAR) has biased composition (basic and acidic residues).

In terms of assembly, heterohexamer; disulfide linked. Contains 2 sets of 3 non-identical chains (alpha, beta and gamma). The 2 heterotrimers are in head to head conformation with the N-termini in a small central domain. Post-translationally, conversion of fibrinogen to fibrin is triggered by thrombin, which cleaves fibrinopeptides A and B from alpha and beta chains, and thus exposes the N-terminal polymerization sites responsible for the formation of the soft clot.

The protein resides in the secreted. In terms of biological role, cleaved by the protease thrombin to yield monomers which, together with fibrinogen alpha (FGA) and fibrinogen gamma (FGG), polymerize to form an insoluble fibrin matrix. Fibrin has a major function in hemostasis as one of the primary components of blood clots. In addition, functions during the early stages of wound repair to stabilize the lesion and guide cell migration during re-epithelialization. Was originally thought to be essential for platelet aggregation, based on in vitro studies using anticoagulated blood. However subsequent studies have shown that it is not absolutely required for thrombus formation in vivo. Enhances expression of SELP in activated platelets. Maternal fibrinogen is essential for successful pregnancy. Fibrin deposition is also associated with infection, where it protects against IFNG-mediated hemorrhage. May also facilitate the antibacterial immune response via both innate and T-cell mediated pathways. The chain is Fibrinogen beta chain (FGB) from Cervus elaphus (Red deer).